The sequence spans 251 residues: Keratin-associated protein 10-10 (251 aa).

15 consecutive repeat copies span residues 26–30 (CCEPC), 31–35 (CCAPA), 52–56 (CCQTA), 84–88 (CCTSS), 94–98 (CCVPV), 99–103 (CCVPV), 104–109 (CCVPVC), 126–130 (CCQQS), 136–140 (CCTSS), 146–150 (CCVPV), 168–172 (CCQQS), 178–182 (CCTAS), 183–187 (CCRPS), 202–206 (CCVPV), and 220–224 (CCRTA). Residues 26–224 (CCEPCCCAPA…SCQPSCCRTA (199 aa)) form a 15 X 5 AA repeats of C-C-X(3) region.

Belongs to the KRTAP type 10 family. Interacts with hair keratins. As to expression, restricted to a narrow region of the hair fiber cuticle, lying approximately 20 cell layers above the apex of the dermal papilla of the hair root; not detected in any other tissues.

In terms of biological role, in the hair cortex, hair keratin intermediate filaments are embedded in an interfilamentous matrix, consisting of hair keratin-associated proteins (KRTAP), which are essential for the formation of a rigid and resistant hair shaft through their extensive disulfide bond cross-linking with abundant cysteine residues of hair keratins. The matrix proteins include the high-sulfur and high-glycine-tyrosine keratins. The sequence is that of Keratin-associated protein 10-10 (KRTAP10-10) from Homo sapiens (Human).